Here is a 179-residue protein sequence, read N- to C-terminus: Large ribosomal subunit protein uL5 (179 aa).

Belongs to the universal ribosomal protein uL5 family. Part of the 50S ribosomal subunit; part of the 5S rRNA/L5/L18/L25 subcomplex. Contacts the 5S rRNA and the P site tRNA. Forms a bridge to the 30S subunit in the 70S ribosome.

This is one of the proteins that bind and probably mediate the attachment of the 5S RNA into the large ribosomal subunit, where it forms part of the central protuberance. In the 70S ribosome it contacts protein S13 of the 30S subunit (bridge B1b), connecting the 2 subunits; this bridge is implicated in subunit movement. Contacts the P site tRNA; the 5S rRNA and some of its associated proteins might help stabilize positioning of ribosome-bound tRNAs. In Geotalea daltonii (strain DSM 22248 / JCM 15807 / FRC-32) (Geobacter daltonii), this protein is Large ribosomal subunit protein uL5.